Reading from the N-terminus, the 1119-residue chain is Transient receptor potential cation channel subfamily A member 1 (1119 aa).

Over 1–718 the chain is Cytoplasmic; it reads MKRSLRKMWR…MKWLAYGFRA (718 aa). 16 ANK repeats span residues 62–92, 97–126, 130–160, 164–193, 197–226, 238–267, 271–301, 308–337, 341–370, 374–403, 412–441, 445–474, 481–510, 513–542, 547–576, and 579–609; these read MDTF…EVLH, YGNT…NPNL, NMMA…DVNL, NGNT…KPCK, WGCF…EHGY, GKAT…QIDP, GRCT…SVDI, CHET…DINK, EGRS…QVDI, FGRN…QQIK, DGCT…SIHS, DKKS…DTRL, HGMT…LFLS, NGWT…KCTD, DGNT…DIVL, and QQAS…DECL. 5 cysteine pairs are disulfide-bonded: Cys192/Cys665, Cys462/Cys665, Cys608/Cys621, Cys621/Cys665, and Cys633/Cys856. Position 394 is a 4-hydroxyproline; by EGLN1; transient; in normoxia and hyperoxia (Pro394). (E)-cinnamaldehyde is bound by residues Cys414 and Cys421. Cys621 serves as a coordination point for (E)-cinnamaldehyde. Cys633 is modified (cysteine sulfenic acid (-SOH); transient; in hyperoxia). Positions 641, 665, and 710 each coordinate (E)-cinnamaldehyde. The chain crosses the membrane as a helical span at residues 719–739; the sequence is HMMNLGSYCLGLIPMTILVVN. At 740–767 the chain is on the extracellular side; it reads IKPGMAFNSTGIINETSDHSEILDTTNS. N-linked (GlcNAc...) asparagine glycans are attached at residues Asn747 and Asn753. Residues 768-793 traverse the membrane as a helical segment; it reads YLIKTCMILVFLSSIFGYCKEAGQIF. Residues Glu788 and Gln791 each coordinate Ca(2+). Residues 794–798 lie on the Cytoplasmic side of the membrane; that stretch reads QQKRN. A helical membrane pass occupies residues 799-823; it reads YFMDISNVLEWIIYTTGIIFVLPLF. Positions 805 and 808 each coordinate Ca(2+). Residues 824–829 are Extracellular-facing; the sequence is VEIPAH. The chain crosses the membrane as a helical span at residues 830 to 850; the sequence is LQWQCGAIAVYFYWMNFLLYL. Residues 851 to 862 are Cytoplasmic-facing; it reads QRFENCGIFIVM. Cys856 is modified (cysteine sulfenic acid (-SOH); transient; in hyperoxia). A helical membrane pass occupies residues 863-892; it reads LEVILKTLLRSTVVFIFLLLAFGLSFYILL. Residues 893–901 lie on the Extracellular side of the membrane; the sequence is NLQDPFSSP. Positions 902 to 922 form an intramembrane region, pore-forming; that stretch reads LLSIIQTFSMMLGDINYRESF. At 923-933 the chain is on the extracellular side; the sequence is LEPYLRNELAH. A helical transmembrane segment spans residues 934 to 960; sequence PVLSFAQLVSFTIFVPIVLMNLLIGLA. Over 961–1119 the chain is Cytoplasmic; that stretch reads VGDIAEVQKH…VKAKTHHLEP (159 aa). Residues 1042 to 1071 adopt a coiled-coil conformation; the sequence is MEILKQKYRLKDLTFLLEKQHELIKLIIQK. Residue 1046-1052 coordinates a 1,2-diacyl-sn-glycero-3-phospho-(1D-myo-inositol); that stretch reads KQKYRLK.

It belongs to the transient receptor (TC 1.A.4) family. As to quaternary structure, homotetramer. Interacts with TMEM100. Interacts with EGLN1. Interacts with the scorpion wasabi receptor toxin at the same site that electrophiles but in a non-covalent manner. TRPA1 activation by electrophiles occurs though covalent modification of specific cysteine residues in the N-terminal cytoplasmic domain. In terms of processing, hydroxylation is required for TRPA1 activity inhibition in normoxia. In hypoxia, the decrease in oxygen concentration diminishes the activity of the hydroxylase EGLN1, thus relieving TRPA1 from inhibition and ultimately leading to channel activation. Post-translationally, oxidation of Cys-633 and Cys-856 in hyperoxia may override the hydroxylase EGLN1-mediated inhibition, causing TRPA1 activation.

It is found in the cell membrane. The enzyme catalyses Ca(2+)(in) = Ca(2+)(out). The catalysed reaction is Mg(2+)(in) = Mg(2+)(out). It catalyses the reaction Na(+)(in) = Na(+)(out). It carries out the reaction K(+)(in) = K(+)(out). The enzyme catalyses Zn(2+)(in) = Zn(2+)(out). With respect to regulation, electrophilic ligands activate the channel by covalent modification of intracellular cysteines; Cys-621 plays a key role in covalent binding of electrophiles. Extracellular Ca(2+) both potentiates and inactivates TRPA1; a rapid potentiation follows by slow desensitization. Activated by increase in intracellular Ca(2+) concentration. Inhibited by the potent blocker of TRPV channels ruthenium red, A-967079, AP-18, HC-030031, and aryl sulfonamide derivative (S)-N-(4-chlorobenzyl)-1-((4-fluorophenyl)sulfonyl)pyrrolidine-2-carboxamide (ASD). Activated by benzyl isothiocyanate (BITC), iodoacetamide, sulfhydryl reactive agent MTSEA, N-methyl maleimide (NMM), N-ethylmaleimide (NEM), and 2-aminoethyldiphenylborinate (2-APB). Also activated by hyperoxia. Acivated by intracellular Zn(2+). TRPA1 activation may critically depend on the presence of small intracellular compounds such as polyphosphates. Ligand-activated Ca(2+)-permeable, nonselective cation channel involved in pain detection and possibly also in cold perception, oxygen concentration perception, cough, itch, and inner ear function. Has a relatively high Ca(2+) selectivity, with a preference for divalent over monovalent cations (Ca(2+) &gt; Ba(2+) &gt; Mg(2+) &gt; NH4(+) &gt; Li(+) &gt; K(+)), the influx of cation into the cytoplasm leads to membrane depolarization. Has a central role in the pain response to endogenous inflammatory mediators, such as bradykinin and to a diverse array of irritants. Activated by a large variety of structurally unrelated electrophilic and non-electrophilic chemical compounds, such as allylthiocyanate (AITC) from mustard oil or wasabi, cinnamaldehyde, diallyl disulfide (DADS) from garlic, and acrolein, an environmental irritant. Electrophilic ligands activate TRPA1 by interacting with critical N-terminal Cys residues in a covalent manner. Non-electrophile agonists bind at distinct sites in the transmembrane domain to promote channel activation. Also acts as an ionotropic cannabinoid receptor by being activated by delta(9)-tetrahydrocannabinol (THC), the psychoactive component of marijuana. May be a component for the mechanosensitive transduction channel of hair cells in inner ear, thereby participating in the perception of sounds. The polypeptide is Transient receptor potential cation channel subfamily A member 1 (Homo sapiens (Human)).